A 452-amino-acid polypeptide reads, in one-letter code: Phosphoglucosamine mutase (452 aa).

Residue Ser108 is the Phosphoserine intermediate of the active site. Ser108, Asp247, Asp249, and Asp251 together coordinate Mg(2+). Ser108 carries the post-translational modification Phosphoserine.

It belongs to the phosphohexose mutase family. The cofactor is Mg(2+). Activated by phosphorylation.

It catalyses the reaction alpha-D-glucosamine 1-phosphate = D-glucosamine 6-phosphate. Catalyzes the conversion of glucosamine-6-phosphate to glucosamine-1-phosphate. This Burkholderia pseudomallei (strain K96243) protein is Phosphoglucosamine mutase.